Reading from the N-terminus, the 354-residue chain is 3-dehydroquinate synthase (354 aa).

NAD(+) contacts are provided by residues 100-104 (GATGD), 124-125 (TT), K136, K145, and 163-166 (FLKT). Residues E178, H242, and H256 each coordinate Zn(2+).

Belongs to the sugar phosphate cyclases superfamily. Dehydroquinate synthase family. It depends on NAD(+) as a cofactor. The cofactor is Co(2+). Zn(2+) is required as a cofactor.

The protein resides in the cytoplasm. The enzyme catalyses 7-phospho-2-dehydro-3-deoxy-D-arabino-heptonate = 3-dehydroquinate + phosphate. It functions in the pathway metabolic intermediate biosynthesis; chorismate biosynthesis; chorismate from D-erythrose 4-phosphate and phosphoenolpyruvate: step 2/7. Catalyzes the conversion of 3-deoxy-D-arabino-heptulosonate 7-phosphate (DAHP) to dehydroquinate (DHQ). This Staphylococcus aureus (strain MSSA476) protein is 3-dehydroquinate synthase.